The following is a 314-amino-acid chain: Ribonuclease Z (314 aa).

The Zn(2+) site is built by histidine 62, histidine 64, aspartate 66, histidine 67, histidine 139, aspartate 210, and histidine 268. The active-site Proton acceptor is aspartate 66.

It belongs to the RNase Z family. Homodimer. Zn(2+) is required as a cofactor.

The enzyme catalyses Endonucleolytic cleavage of RNA, removing extra 3' nucleotides from tRNA precursor, generating 3' termini of tRNAs. A 3'-hydroxy group is left at the tRNA terminus and a 5'-phosphoryl group is left at the trailer molecule.. In terms of biological role, zinc phosphodiesterase, which displays some tRNA 3'-processing endonuclease activity. Probably involved in tRNA maturation, by removing a 3'-trailer from precursor tRNA. This Rippkaea orientalis (strain PCC 8801 / RF-1) (Cyanothece sp. (strain PCC 8801)) protein is Ribonuclease Z.